The following is a 358-amino-acid chain: Glutamine synthetase (358 aa).

The region spanning 26-105 (ILAEYIWIDG…VLAECWNADG (80 aa)) is the GS beta-grasp domain. One can recognise a GS catalytic domain in the interval 112 to 358 (HRHECAKIME…IMMETICGGI (247 aa)).

The protein belongs to the glutamine synthetase family. In terms of assembly, homooctamer.

It is found in the cytoplasm. It carries out the reaction L-glutamate + NH4(+) + ATP = L-glutamine + ADP + phosphate + H(+). In Tuber borchii (White truffle), this protein is Glutamine synthetase (GLN1).